A 316-amino-acid chain; its full sequence is Glutathione synthetase (316 aa).

The region spanning 125–310 (KLFTAWFSDL…ITGMLMDAIE (186 aa)) is the ATP-grasp domain. ATP is bound at residue 151 to 207 (WEKHSDIILKPLDGMGGASIFRVKEGDPNLGVIAETLTEHGTCYCMAQNYLPAIKDG). 2 residues coordinate Mg(2+): Glu281 and Asn283.

This sequence belongs to the prokaryotic GSH synthase family. The cofactor is Mg(2+). Requires Mn(2+) as cofactor.

The enzyme catalyses gamma-L-glutamyl-L-cysteine + glycine + ATP = glutathione + ADP + phosphate + H(+). It functions in the pathway sulfur metabolism; glutathione biosynthesis; glutathione from L-cysteine and L-glutamate: step 2/2. The chain is Glutathione synthetase from Shigella flexneri.